A 239-amino-acid chain; its full sequence is Ribosomal RNA small subunit methyltransferase G (239 aa).

S-adenosyl-L-methionine-binding positions include glycine 77, phenylalanine 82, 128-129 (AE), and arginine 147. The tract at residues 219–239 (KNTPKKYPRKPGTPNKSPIEG) is disordered.

It belongs to the methyltransferase superfamily. RNA methyltransferase RsmG family.

Its subcellular location is the cytoplasm. Functionally, specifically methylates the N7 position of guanine in position 535 of 16S rRNA. The chain is Ribosomal RNA small subunit methyltransferase G from Bacillus subtilis (strain 168).